The primary structure comprises 61 residues: Large ribosomal subunit protein uL30 (61 aa).

Belongs to the universal ribosomal protein uL30 family. Part of the 50S ribosomal subunit.

The protein is Large ribosomal subunit protein uL30 of Maricaulis maris (strain MCS10) (Caulobacter maris).